Consider the following 344-residue polypeptide: N-acetyl-gamma-glutamyl-phosphate reductase (344 aa).

Cys-148 is an active-site residue.

Belongs to the NAGSA dehydrogenase family. Type 1 subfamily.

The protein resides in the cytoplasm. It carries out the reaction N-acetyl-L-glutamate 5-semialdehyde + phosphate + NADP(+) = N-acetyl-L-glutamyl 5-phosphate + NADPH + H(+). It functions in the pathway amino-acid biosynthesis; L-arginine biosynthesis; N(2)-acetyl-L-ornithine from L-glutamate: step 3/4. Functionally, catalyzes the NADPH-dependent reduction of N-acetyl-5-glutamyl phosphate to yield N-acetyl-L-glutamate 5-semialdehyde. This is N-acetyl-gamma-glutamyl-phosphate reductase from Clostridium botulinum (strain Eklund 17B / Type B).